The following is a 330-amino-acid chain: DNA-binding death effector domain-containing protein 2 (330 aa).

Residues 25–104 (SLHRMFEVVG…RHDLLPHLAR (80 aa)) enclose the DED domain. The short motif at 104–109 (RKRRRP) is the Nuclear localization signal element. Residues 104-195 (RKRRRPVSPE…HQELGRPSSE (92 aa)) are disordered. Residues 137–147 (ASSSSDSPQSQ) are compositionally biased toward low complexity. Residues 156-174 (KRQRRSRGRPSSGARQRRR) carry the Bipartite nuclear localization signal motif.

In terms of assembly, interacts with CASP8, CASP10 and GTF3C3. Homodimerizes and heterodimerizes with DEDD. In terms of tissue distribution, expression is high in liver, heart, kidney, and testis but low in brain, spleen, lung, and skeleton muscle.

The protein resides in the nucleus. The protein localises to the nucleolus. May play a critical role in death receptor-induced apoptosis and may target CASP8 and CASP10 to the nucleus. May regulate degradation of intermediate filaments during apoptosis. May play a role in the general transcription machinery in the nucleus and might be an important regulator of the activity of GTF3C3. This is DNA-binding death effector domain-containing protein 2 (Dedd2) from Mus musculus (Mouse).